A 154-amino-acid chain; its full sequence is Spermatogenesis-associated protein 19, mitochondrial (154 aa).

Residues 1-24 (MIITTWIMYIFARKTVGLPFPPRV) constitute a mitochondrion transit peptide. A phosphoserine mark is found at Ser-26 and Ser-116.

In terms of tissue distribution, expressed specifically in adult testis (at protein level).

Its subcellular location is the mitochondrion outer membrane. The protein localises to the mitochondrion. It is found in the cell projection. The protein resides in the cilium. It localises to the flagellum. Functionally, essential for sperm motility and male fertility. Plays an important role in sperm motility by regulating the organization and function of the mitochondria and is also required for correct sperm midpiece assembly. The chain is Spermatogenesis-associated protein 19, mitochondrial (Spata19) from Mus musculus (Mouse).